Consider the following 750-residue polypeptide: Rho GTPase-activating protein 9 (750 aa).

In terms of domain architecture, SH3 spans 22 to 88; it reads PRGSQLCALY…PAAYMIEESI (67 aa). 2 disordered regions span residues 120–187 and 242–319; these read ALPS…LMSE and WKPP…LLDD. Residues 163–180 show a composition bias toward polar residues; that stretch reads RSLSQEDLPSEASASTAG. The region spanning 213-247 is the WW domain; sequence LQRLDAWEQHLDPNSGRCFYINSLTGCKSWKPPRR. Composition is skewed to polar residues over residues 251 to 270 and 291 to 300; these read ETNP…NDVL and GSLSLSQRTS. The span at 301–317 shows a compositional bias: low complexity; the sequence is QLDPPALQAPRPLPQLL. The region spanning 322–435 is the PH domain; sequence EVEKSGLLNM…WHRALRTVIE (114 aa). Lipid binding stretches follow at residues 342 to 345, 397 to 399, and 432 to 669; these read RKNW, SSR, and TVIE…CLSQ. Over residues 446–462 the composition is skewed to basic and acidic residues; the sequence is EAPTGRDQGSGDRENPL. The segment at 446–488 is disordered; it reads EAPTGRDQGSGDRENPLELRLSGSGPAELSAGEDEEEESELVS. Position 475 is a phosphoserine (serine 475). A compositionally biased stretch (acidic residues) spans 476–485; the sequence is AGEDEEEESE. Serine 500 bears the Phosphoserine mark. One can recognise a Rho-GAP domain in the interval 542-749; that stretch reads CQLESLCQRE…LMLTNFTSLF (208 aa).

As to quaternary structure, interacts with FASLG. Predominantly expressed in peripheral blood leukocytes, spleen, and thymus.

In terms of biological role, GTPase activator for the Rho-type GTPases by converting them to an inactive GDP-bound state. Has a substantial GAP activity toward CDC42 and RAC1 and less toward RHOA. Has a role in regulating adhesion of hematopoietic cells to the extracellular matrix. Binds phosphoinositides, and has the highest affinity for phosphatidylinositol 3,4,5-trisphosphate, followed by phosphatidylinositol 3,4-bisphosphate and phosphatidylinositol 4,5-bisphosphate. The chain is Rho GTPase-activating protein 9 (ARHGAP9) from Homo sapiens (Human).